A 179-amino-acid polypeptide reads, in one-letter code: ADP-ribosylation factor-like protein 5A (179 aa).

Glycine 2 is lipidated: N-myristoyl glycine. Residues 23–30 (GLDNAGKT), 66–70 (DIGGQ), 125–128 (NKQD), and alanine 159 contribute to the GTP site.

The protein belongs to the small GTPase superfamily. Arf family. Low amounts were found in most tissues examined with highest levels in brain, intestine and thymus.

Functionally, lacks ADP-ribosylation enhancing activity. This is ADP-ribosylation factor-like protein 5A (Arl5a) from Rattus norvegicus (Rat).